We begin with the raw amino-acid sequence, 379 residues long: Carboxypeptidase Y-deficient protein 8 (379 aa).

The segment covering 84–107 (HGSGNSSSKKVTSSTSSSSSNGSV) has biased composition (low complexity). The interval 84 to 108 (HGSGNSSSKKVTSSTSSSSSNGSVD) is disordered. The residue at position 216 (Ser216) is a Phosphoserine.

The protein belongs to the VPS26 family. In terms of assembly, component of the retromer complex which consists of VPS29, VPS26, VPS35, VPS5 and VPS17. Component of a retromer subcomplex consisting of VPS29, VPS26 and VPS35.

In terms of biological role, plays a role in vesicular protein sorting. Required for the endosome-to-Golgi retrieval of the vacuolar protein sorting receptor VPS10. Component of the membrane-associated retromer complex which is essential in endosome-to-Golgi retrograde transport. The VPS29-VPS26-VPS35 subcomplex may be involved in cargo selection. In Saccharomyces cerevisiae (strain ATCC 204508 / S288c) (Baker's yeast), this protein is Carboxypeptidase Y-deficient protein 8 (PEP8).